Reading from the N-terminus, the 122-residue chain is MPRIIGIDIPAKKKLKISLTYIYGIGPALSKEIIARLQLNPEARAAELTEEEVGRLNALLQSDYVVEGDLRRRVQSDIKRLITIHAYRGQRHRLSLPVRGQRTKTNSRTRKGKRKTVAGKKK.

The interval Leu-94–Lys-122 is disordered. A compositionally biased stretch (basic residues) spans Gln-101 to Lys-122.

The protein belongs to the universal ribosomal protein uS13 family. As to quaternary structure, part of the 30S ribosomal subunit. Forms a loose heterodimer with protein S19. Forms two bridges to the 50S subunit in the 70S ribosome.

Functionally, located at the top of the head of the 30S subunit, it contacts several helices of the 16S rRNA. In the 70S ribosome it contacts the 23S rRNA (bridge B1a) and protein L5 of the 50S subunit (bridge B1b), connecting the 2 subunits; these bridges are implicated in subunit movement. Contacts the tRNAs in the A and P-sites. In Chlamydia trachomatis serovar A (strain ATCC VR-571B / DSM 19440 / HAR-13), this protein is Small ribosomal subunit protein uS13.